A 319-amino-acid polypeptide reads, in one-letter code: Ferrochelatase (319 aa).

2 residues coordinate Fe cation: histidine 192 and glutamate 271.

This sequence belongs to the ferrochelatase family.

The protein resides in the cytoplasm. The catalysed reaction is heme b + 2 H(+) = protoporphyrin IX + Fe(2+). It functions in the pathway porphyrin-containing compound metabolism; protoheme biosynthesis; protoheme from protoporphyrin-IX: step 1/1. Functionally, catalyzes the ferrous insertion into protoporphyrin IX. The polypeptide is Ferrochelatase (Geotalea daltonii (strain DSM 22248 / JCM 15807 / FRC-32) (Geobacter daltonii)).